Here is a 148-residue protein sequence, read N- to C-terminus: Snaclec B4 (148 aa).

A signal peptide spans 1-24 (MGRIIFVSFGLLVVFLSLSGTGAA). 3 cysteine pairs are disulfide-bonded: cysteine 27/cysteine 38, cysteine 55/cysteine 144, and cysteine 121/cysteine 136. The 112-residue stretch at 34–145 (YDQHCYKVFD…CRLLGHFVCK (112 aa)) folds into the C-type lectin domain.

This sequence belongs to the snaclec family. Heterodimer; disulfide-linked. In terms of tissue distribution, expressed by the venom gland.

It is found in the secreted. Interferes with one step of hemostasis (modulation of platelet aggregation, or coagulation cascade, for example). This Macrovipera lebetinus (Levantine viper) protein is Snaclec B4.